A 649-amino-acid chain; its full sequence is Acetyl-coenzyme A synthetase (649 aa).

Residues 198 to 201 (RRGK), T317, and N341 contribute to the CoA site. ATP contacts are provided by residues 393 to 395 (GEP), 417 to 422 (DTWWQT), D506, and R521. Residue S529 coordinates CoA. R532 is an ATP binding site. Mg(2+) is bound by residues V543, H545, and V548. Residue K612 is modified to N6-acetyllysine. The tract at residues 625-649 (QPVQGDTSTLEDPTVLERLQASPAL) is disordered.

Belongs to the ATP-dependent AMP-binding enzyme family. It depends on Mg(2+) as a cofactor. In terms of processing, acetylated. Deacetylation by the SIR2-homolog deacetylase activates the enzyme.

It catalyses the reaction acetate + ATP + CoA = acetyl-CoA + AMP + diphosphate. Functionally, catalyzes the conversion of acetate into acetyl-CoA (AcCoA), an essential intermediate at the junction of anabolic and catabolic pathways. AcsA undergoes a two-step reaction. In the first half reaction, AcsA combines acetate with ATP to form acetyl-adenylate (AcAMP) intermediate. In the second half reaction, it can then transfer the acetyl group from AcAMP to the sulfhydryl group of CoA, forming the product AcCoA. In Deinococcus radiodurans (strain ATCC 13939 / DSM 20539 / JCM 16871 / CCUG 27074 / LMG 4051 / NBRC 15346 / NCIMB 9279 / VKM B-1422 / R1), this protein is Acetyl-coenzyme A synthetase.